Consider the following 138-residue polypeptide: Small ribosomal subunit protein uS11c (138 aa).

It belongs to the universal ribosomal protein uS11 family. In terms of assembly, part of the 30S ribosomal subunit.

It is found in the plastid. It localises to the chloroplast. This chain is Small ribosomal subunit protein uS11c, found in Illicium oligandrum (Star anise).